We begin with the raw amino-acid sequence, 137 residues long: Nucleoside diphosphate kinase (137 aa).

Lys-9, Phe-58, Arg-86, Thr-92, Arg-103, and Asn-113 together coordinate ATP. The active-site Pros-phosphohistidine intermediate is the His-121.

This sequence belongs to the NDK family. Homotetramer. It depends on Mg(2+) as a cofactor.

The protein resides in the cytoplasm. It catalyses the reaction a 2'-deoxyribonucleoside 5'-diphosphate + ATP = a 2'-deoxyribonucleoside 5'-triphosphate + ADP. It carries out the reaction a ribonucleoside 5'-diphosphate + ATP = a ribonucleoside 5'-triphosphate + ADP. Its function is as follows. Major role in the synthesis of nucleoside triphosphates other than ATP. The ATP gamma phosphate is transferred to the NDP beta phosphate via a ping-pong mechanism, using a phosphorylated active-site intermediate. This Streptococcus pneumoniae (strain P1031) protein is Nucleoside diphosphate kinase.